Reading from the N-terminus, the 545-residue chain is Adenine deaminase (545 aa).

It belongs to the metallo-dependent hydrolases superfamily. Adenine deaminase family. It depends on Mn(2+) as a cofactor.

It catalyses the reaction adenine + H2O + H(+) = hypoxanthine + NH4(+). In Parabacteroides distasonis (strain ATCC 8503 / DSM 20701 / CIP 104284 / JCM 5825 / NCTC 11152), this protein is Adenine deaminase.